Reading from the N-terminus, the 538-residue chain is Phosphoenolpyruvate carboxykinase (ATP) (538 aa).

Positions 61, 195, and 201 each coordinate substrate. Residues Lys-201, His-220, and 236–244 contribute to the ATP site; that span reads GLSGTGKTT. Residues Lys-201 and His-220 each contribute to the Mn(2+) site. Asp-257 provides a ligand contact to Mn(2+). Residues Glu-285, Arg-323, and Thr-449 each coordinate ATP. Residue Arg-323 coordinates substrate.

The protein belongs to the phosphoenolpyruvate carboxykinase (ATP) family. Requires Mn(2+) as cofactor.

Its subcellular location is the cytoplasm. The enzyme catalyses oxaloacetate + ATP = phosphoenolpyruvate + ADP + CO2. The protein operates within carbohydrate biosynthesis; gluconeogenesis. Involved in the gluconeogenesis. Catalyzes the conversion of oxaloacetate (OAA) to phosphoenolpyruvate (PEP) through direct phosphoryl transfer between the nucleoside triphosphate and OAA. This is Phosphoenolpyruvate carboxykinase (ATP) from Nitrobacter hamburgensis (strain DSM 10229 / NCIMB 13809 / X14).